Reading from the N-terminus, the 112-residue chain is Colipase (112 aa).

Residues 1–17 form the signal peptide; the sequence is MEKVLILLLVALAVAYA. A propeptide spans 18–22 (enterostatin, activation peptide); it reads VPDPR. Disulfide bonds link C34–C45, C40–C56, C44–C78, C66–C86, and C80–C104.

This sequence belongs to the colipase family. In terms of assembly, forms a 1:1 stoichiometric complex with pancreatic lipase.

It is found in the secreted. Colipase is a cofactor of pancreatic lipase. It allows the lipase to anchor itself to the lipid-water interface. Without colipase the enzyme is washed off by bile salts, which have an inhibitory effect on the lipase. Its function is as follows. Enterostatin has a biological activity as a satiety signal. This is Colipase (CLPS) from Bos taurus (Bovine).